A 173-amino-acid polypeptide reads, in one-letter code: CASP-like protein 3A1 (173 aa).

A topological domain (cytoplasmic) is located at residue Met1. A helical transmembrane segment spans residues 2 to 22 (VDIALRSAVVAFMVVSLSAMF). Residues 23 to 48 (TSTQHSEVHIIGFSIPVSLRWNRSQP) lie on the Extracellular side of the membrane. Residue Asn44 is glycosylated (N-linked (GlcNAc...) asparagine). A helical transmembrane segment spans residues 49–69 (FEFLVVVELLICAYAFVQFVY). The Cytoplasmic portion of the chain corresponds to 70 to 84 (QSVVLAKNAVPTRRC). Residues 85-105 (IWVQLAADQVCAYLVLAAAAA) form a helical membrane-spanning segment. Residues 106-140 (AAGASRTNKSGFQSLGMQNIKVPGVCIVLDKFCNR) lie on the Extracellular side of the membrane. Residue Asn113 is glycosylated (N-linked (GlcNAc...) asparagine). The chain crosses the membrane as a helical span at residues 141–161 (ATIAIIFTLLAAGASGISVTL). Residues 162-173 (DVYMLTLTYYMG) are Cytoplasmic-facing.

The protein belongs to the Casparian strip membrane proteins (CASP) family. Homodimer and heterodimers.

The protein resides in the cell membrane. The chain is CASP-like protein 3A1 from Pteridium aquilinum subsp. aquilinum (Bracken fern).